The sequence spans 149 residues: MAANSEPFWKRKTLAQLDRDEWESLCDGCGLCCLQKLEDEDDGAVYYTRIACKLLDLQTCRCSDYANRIKHVPDCIQLTPAQADQFQWLPPTCAYRLVSEGRDLPHWHHLVSGDPDAVHAERISQSGRMLSENSVAEEDWEEHLIFRAG.

It belongs to the UPF0260 family.

The polypeptide is UPF0260 protein Pmen_1776 (Ectopseudomonas mendocina (strain ymp) (Pseudomonas mendocina)).